Consider the following 449-residue polypeptide: Chromosomal replication initiator protein DnaA (449 aa).

Positions Met1 to Leu72 are domain I, interacts with DnaA modulators. The tract at residues Leu72–Thr109 is domain II. The domain III, AAA+ region stretch occupies residues His110 to Ser326. Residues Gly154, Gly156, Lys157, and Thr158 each coordinate ATP. Residues Thr327–Gly449 form a domain IV, binds dsDNA region.

The protein belongs to the DnaA family. As to quaternary structure, oligomerizes as a right-handed, spiral filament on DNA at oriC.

Its subcellular location is the cytoplasm. Plays an essential role in the initiation and regulation of chromosomal replication. ATP-DnaA binds to the origin of replication (oriC) to initiate formation of the DNA replication initiation complex once per cell cycle. Binds the DnaA box (a 9 base pair repeat at the origin) and separates the double-stranded (ds)DNA. Forms a right-handed helical filament on oriC DNA; dsDNA binds to the exterior of the filament while single-stranded (ss)DNA is stabiized in the filament's interior. The ATP-DnaA-oriC complex binds and stabilizes one strand of the AT-rich DNA unwinding element (DUE), permitting loading of DNA polymerase. After initiation quickly degrades to an ADP-DnaA complex that is not apt for DNA replication. Binds acidic phospholipids. This is Chromosomal replication initiator protein DnaA from Lacticaseibacillus paracasei (strain ATCC 334 / BCRC 17002 / CCUG 31169 / CIP 107868 / KCTC 3260 / NRRL B-441) (Lactobacillus paracasei).